The sequence spans 317 residues: Epidermal growth factor-like protein (317 aa).

An N-terminal signal peptide occupies residues 1-23 (MDFKIFLFLTAIFMIVGVTVSTA). Residues 24 to 33 (TTNPTAPRAY) form a may be required for E.coli agglutination activity region. EGF-like domains are found at residues 93 to 128 (HCTPDCPSGCGLGNCTAPNVCTCNKGAGFGPDGKCI), 130 to 161 (VCPGRCLNGQCYGNFCNCNSGFVLEPNGRYCT), 163 to 195 (GCTRNCGPGGQCVGNNQCSCLSGFALNSQGTCQ), 208 to 243 (ACEPLCPKGCVNGECVAPGQCRCKSGYALNSSKVCA), 245 to 280 (KCSQPCYNGFCSAPNVCTCKEGYIKDATSRNGNRCI), and 282 to 315 (YCAAGCPNGTCSAPNFCICKQGYIKQSKGSNVCV). Cystine bridges form between cysteine 98–cysteine 107, cysteine 102–cysteine 113, cysteine 115–cysteine 127, cysteine 131–cysteine 140, cysteine 135–cysteine 145, cysteine 147–cysteine 160, cysteine 164–cysteine 174, cysteine 168–cysteine 180, cysteine 182–cysteine 194, cysteine 213–cysteine 222, cysteine 217–cysteine 228, cysteine 230–cysteine 242, cysteine 246–cysteine 255, cysteine 250–cysteine 261, cysteine 263–cysteine 279, cysteine 283–cysteine 292, cysteine 287–cysteine 298, and cysteine 300–cysteine 314.

The protein resides in the secreted. Its function is as follows. Binds to lipopolysaccharides (LPS) present on the cell walls of Gram-negative bacteria, behaving as a pattern recognition receptor (PRR). Induces bacterial aggregation and enhances their subsequent clearance by the innate immune response. Binds to the inner core oligosaccharides region of rough-type bacterial LPS. Displays activity against the Gram-negative bacterium E.coli. Does not display any activity against the Gram-positive bacterium S.aureus or the fungi C.albicans. This is Epidermal growth factor-like protein from Holotrichia diomphalia (Korean black chafer).